Consider the following 384-residue polypeptide: MNKSDSFYNLETIGGILLFIAAVLAIIIANSPYRIGYDYFLSINGSVSVGNLSITKPLLLWINDGLMAIYFLLIGLEIKREVNRGILSDKTNLLVPALTALAGLLFPALIFIFFNAHHPVYLKGWAIPTATDIAFTLGIVSLLGSRVPFSLKILLTAIAIFDDIAAIVIIALFYTEQLSLLSLSLALVFTLILIGLNYFKCRRISVFMLFGVALWIAVLKSGVHATLAGIVIAMTIPDEGKESMLTRLEDGLHHWVVFLILPLFAFANAGVSFVGLDASMLTHPVVLGIGLGLFLGKQLGIFLSLGYFVQFKKFLKADKVNLAQVYGIALICGVGFTMSLFIGSLAYQNYDLSLMPMVKIGVVFGSFIAGLTGFLVLKMTSLKR.

A run of 11 helical transmembrane segments spans residues asparagine 9 to alanine 29, leucine 58 to isoleucine 78, leucine 94 to phenylalanine 114, glycine 124 to glycine 144, isoleucine 153 to phenylalanine 173, serine 179 to phenylalanine 199, isoleucine 204 to histidine 224, valine 256 to leucine 276, valine 285 to leucine 305, valine 325 to leucine 345, and methionine 357 to leucine 377.

The protein belongs to the NhaA Na(+)/H(+) (TC 2.A.33) antiporter family.

It localises to the cell inner membrane. It carries out the reaction Na(+)(in) + 2 H(+)(out) = Na(+)(out) + 2 H(+)(in). Functionally, na(+)/H(+) antiporter that extrudes sodium in exchange for external protons. The polypeptide is Na(+)/H(+) antiporter NhaA (Legionella pneumophila (strain Lens)).